Consider the following 358-residue polypeptide: 3-O-methylredipecamine 2-O-methyltransferase IpeOMT3 (358 aa).

S-adenosyl-L-methionine contacts are provided by G193, D216, D236, M237, and K250. Catalysis depends on H254, which acts as the Proton acceptor.

Belongs to the class I-like SAM-binding methyltransferase superfamily. Cation-independent O-methyltransferase family. In terms of tissue distribution, expressed in roots.

It localises to the cytoplasm. It is found in the cytosol. It catalyses the reaction (S)-reticuline + S-adenosyl-L-methionine = (S)-laudanine + S-adenosyl-L-homocysteine + H(+). The protein operates within alkaloid biosynthesis. O-methyltransferase involved in the biosynthesis of ipecac and benzylisoquinoline monoterpenoid-isoquinoline alkaloids natural products, starting by the condensation of dopamine and secologanin, and including emetine and cephaeline, drugs used both as anti-protozoal (e.g. treatment of ameobiasis) and as emetic agents. Catalyzes 2-O-methylation of 3-O-methylredipecamine and, with less efficiency, the 7-O-methylation of (S)-coclaurine, (R,S)-N-methylcoclaurine, (R,S)-4'-O-methylcoclaurine, (R,S)-6-O-methyllaudanosoline, nororientaline, (S)-norreticuline and (S)-reticuline. The polypeptide is 3-O-methylredipecamine 2-O-methyltransferase IpeOMT3 (Carapichea ipecacuanha (Ipecac)).